A 364-amino-acid polypeptide reads, in one-letter code: B3 domain-containing protein At5g38490 (364 aa).

The interval 148 to 202 is disordered; it reads ASTSSSSLLNLPCLEPSTETKDVPNPNYQSSSPSSCLTGKTNRKRRAVEQRKSGK. Positions 260 to 364 form a DNA-binding region, TF-B3; the sequence is FQKLIRNDFL…GVLCFALDTE (105 aa).

The protein resides in the nucleus. This chain is B3 domain-containing protein At5g38490, found in Arabidopsis thaliana (Mouse-ear cress).